We begin with the raw amino-acid sequence, 494 residues long: Acetyl-coenzyme A carboxylase carboxyl transferase subunit beta, chloroplastic (494 aa).

Positions 226-494 (LWVQCENCYG…VPLNQNETEH (269 aa)) constitute a CoA carboxyltransferase N-terminal domain. Zn(2+) contacts are provided by cysteine 230, cysteine 233, cysteine 249, and cysteine 252. A C4-type zinc finger spans residues 230–252 (CENCYGLNYKKFLKSKMNICEQC).

The protein belongs to the AccD/PCCB family. In terms of assembly, acetyl-CoA carboxylase is a heterohexamer composed of biotin carboxyl carrier protein, biotin carboxylase and 2 subunits each of ACCase subunit alpha and ACCase plastid-coded subunit beta (accD). Requires Zn(2+) as cofactor.

The protein localises to the plastid. Its subcellular location is the chloroplast stroma. It catalyses the reaction N(6)-carboxybiotinyl-L-lysyl-[protein] + acetyl-CoA = N(6)-biotinyl-L-lysyl-[protein] + malonyl-CoA. The protein operates within lipid metabolism; malonyl-CoA biosynthesis; malonyl-CoA from acetyl-CoA: step 1/1. Functionally, component of the acetyl coenzyme A carboxylase (ACC) complex. Biotin carboxylase (BC) catalyzes the carboxylation of biotin on its carrier protein (BCCP) and then the CO(2) group is transferred by the transcarboxylase to acetyl-CoA to form malonyl-CoA. This Coffea arabica (Arabian coffee) protein is Acetyl-coenzyme A carboxylase carboxyl transferase subunit beta, chloroplastic.